The primary structure comprises 771 residues: Rho GTPase-activating protein 26 (771 aa).

In terms of domain architecture, BAR spans 7-262 (EFSDCYLDSP…MKENPHEHLA (256 aa)). Residues 265-369 (PFTMEGYLYV…WMEAMDGREP (105 aa)) enclose the PH domain. Residues 383–568 (AQLDNIGFSI…IIIENYEEMF (186 aa)) enclose the Rho-GAP domain. The segment at 575–712 (PQTNSQLHLS…SSTSSDSSPV (138 aa)) is disordered. The segment covering 608 to 617 (HSSEKEEKRN) has biased composition (basic and acidic residues). Residues 618 to 637 (SVNSSAESVSSSNANSSVNS) are compositionally biased toward low complexity. Composition is skewed to polar residues over residues 638–650 (TCTQ…NLNA) and 662–671 (RPNSLLNPKN). 2 stretches are compositionally biased toward low complexity: residues 673–683 (SGLLPSSLNPS) and 691–712 (PMVS…SSPV). Positions 713-771 (SVPRKAKALYACKAEHDSELSFSAGTVFENVCPSQEPGWLEGTLNGKTGLIPENYVEFL) constitute an SH3 domain.

It localises to the cell junction. Its subcellular location is the focal adhesion. The protein resides in the cytoplasm. The protein localises to the cytoskeleton. It is found in the endosome membrane. Its function is as follows. GTPase-activating protein for rhoa and cdc42. May be involved in the regulation of neosynthesized protein export through a Rab-endososomal dependent export route. The protein is Rho GTPase-activating protein 26 (arhgap26) of Xenopus laevis (African clawed frog).